A 483-amino-acid chain; its full sequence is Probable glycosyltransferase 6 (483 aa).

Residues 1-40 (MAASETAPFGVSAASKGGGGVAGARAQHGQLAVAGRVHDA) are Cytoplasmic-facing. Residues 41–61 (LVFAAGAVAAVLVLLATASFL) traverse the membrane as a helical; Signal-anchor for type II membrane protein segment. Over 62 to 483 (SPMPVTNLVA…PLPFDYPAAR (422 aa)) the chain is Lumenal. Residue Asn144 is glycosylated (N-linked (GlcNAc...) asparagine).

Belongs to the glycosyltransferase 34 family.

Its subcellular location is the golgi apparatus membrane. In terms of biological role, probable glycosyltransferase that may be involved in the biosynthesis of xyloglucan. This Oryza sativa subsp. japonica (Rice) protein is Probable glycosyltransferase 6.